The chain runs to 68 residues: MARITVEDCLQQIPNRFLLVMVAAKRTKQLYKGGQPLIENKSNNKRVVHCLREIAAGKVDYEIPARKA.

Belongs to the RNA polymerase subunit omega family. As to quaternary structure, the RNAP catalytic core consists of 2 alpha, 1 beta, 1 beta' and 1 omega subunit. When a sigma factor is associated with the core the holoenzyme is formed, which can initiate transcription.

The enzyme catalyses RNA(n) + a ribonucleoside 5'-triphosphate = RNA(n+1) + diphosphate. In terms of biological role, promotes RNA polymerase assembly. Latches the N- and C-terminal regions of the beta' subunit thereby facilitating its interaction with the beta and alpha subunits. The polypeptide is DNA-directed RNA polymerase subunit omega (Syntrophotalea carbinolica (strain DSM 2380 / NBRC 103641 / GraBd1) (Pelobacter carbinolicus)).